A 485-amino-acid chain; its full sequence is Eukaryotic translation initiation factor 3 subunit E (485 aa).

The PCI domain maps to 219–391 (NQPDGPDGIV…GEIHITKPVT (173 aa)). The interval 444–485 (QGGGKSNKKGDYKKGDYKKGGDFKKGGDFKKGGDHKKRAWVK) is disordered. Positions 451–475 (KKGDYKKGDYKKGGDFKKGGDFKKG) are enriched in basic and acidic residues. Residues 476-485 (GDHKKRAWVK) are compositionally biased toward basic residues.

The protein belongs to the eIF-3 subunit E family. Component of the eukaryotic translation initiation factor 3 (eIF-3) complex.

The protein resides in the cytoplasm. In terms of biological role, component of the eukaryotic translation initiation factor 3 (eIF-3) complex, which is involved in protein synthesis of a specialized repertoire of mRNAs and, together with other initiation factors, stimulates binding of mRNA and methionyl-tRNAi to the 40S ribosome. The eIF-3 complex specifically targets and initiates translation of a subset of mRNAs involved in cell proliferation. The sequence is that of Eukaryotic translation initiation factor 3 subunit E from Monosiga brevicollis (Choanoflagellate).